A 930-amino-acid chain; its full sequence is A disintegrin and metalloproteinase with thrombospondin motifs 5 (930 aa).

Positions 1–21 (MRLEWAPLLLLLLLLSASCLS) are cleaved as a signal peptide. Positions 22–261 (LAADSPAAAP…PQTWWRRRRR (240 aa)) are excised as a propeptide. Low complexity predominate over residues 31 to 53 (PAQDKTRQPQAAAAAAEPDQPQG). Disordered regions lie at residues 31-68 (PAQDKTRQPQAAAAAAEPDQPQGEETRERGHLQPLAGQ) and 207-231 (ASCETPASPSGPQESPSVHSRSRRR). Residues 207 to 214 (ASCETPAS) carry the Cysteine switch motif. Zn(2+) is bound at residue Cys-209. Over residues 211–225 (TPASPSGPQESPSVH) the composition is skewed to polar residues. In terms of domain architecture, Peptidase M12B spans 267-476 (RQVELLLVAD…GHGNCLLDLP (210 aa)). 8 cysteine pairs are disulfide-bonded: Cys-342-Cys-394, Cys-371-Cys-376, Cys-388-Cys-471, Cys-426-Cys-455, Cys-497-Cys-519, Cys-508-Cys-529, Cys-514-Cys-548, and Cys-542-Cys-553. His-410 contributes to the Zn(2+) binding site. Residue Glu-411 is part of the active site. 2 residues coordinate Zn(2+): His-414 and His-420. Positions 485–566 (ELPGQTYDAT…TKKKYYSTSS (82 aa)) constitute a Disintegrin domain. An N-linked (GlcNAc...) asparagine glycan is attached at Asn-498. Positions 567-622 (HGNWGSWGPWGQCSRSCGGGVQFAYRHCNNPAPRNSGRYCTGKRAIYRSCSVTPCP) constitute a TSP type-1 1 domain. C-linked (Man) tryptophan glycosylation is found at Trp-570 and Trp-573. 3 disulfides stabilise this stretch: Cys-579-Cys-616, Cys-583-Cys-621, and Cys-594-Cys-606. The O-linked (Fuc...) serine glycan is linked to Ser-582. Residues Asn-728, Asn-802, and Asn-807 are each glycosylated (N-linked (GlcNAc...) asparagine). The interval 732 to 874 (TKIIGTFNKK…HGSNKVGPHS (143 aa)) is spacer. Residues 875-929 (TQLQWVTGPWLACSRTCDTGWHTRTVQCQDGNRKLAKGCLLSQRPSAFKQCLLKK) enclose the TSP type-1 2 domain.

It depends on Zn(2+) as a cofactor. Post-translationally, the precursor is cleaved by furin and PCSK7 outside of the cell. Glycosylated. Can be O-fucosylated by POFUT2 on a serine or a threonine residue found within the consensus sequence C1-X(2)-(S/T)-C2-G of the TSP type-1 repeat domains where C1 and C2 are the first and second cysteine residue of the repeat, respectively. Fucosylated repeats can then be further glycosylated by the addition of a beta-1,3-glucose residue by the glucosyltransferase, B3GALTL. Fucosylation mediates the efficient secretion of ADAMTS family members. Can also be C-glycosylated with one or two mannose molecules on tryptophan residues within the consensus sequence W-X-X-W of the TPRs, and N-glycosylated. These other glycosylations can also facilitate secretion. In terms of tissue distribution, expressed in skeletal muscle.

Its subcellular location is the secreted. It localises to the extracellular space. The protein localises to the extracellular matrix. Its function is as follows. Metalloproteinase that plays an important role in connective tissue organization, development, inflammation and cell migration. Extracellular matrix (ECM) degrading enzyme that shows proteolytic activity toward the hyalectan group of chondroitin sulfate proteoglycans (CSPGs) including ACAN, VCAN, BCAN and NCAN. Cleavage within the hyalectans occurs at Glu-Xaa recognition motifs. Plays a role in embryonic development, including limb and cardiac morphogenesis, and skeletal muscle development through its VCAN remodeling properties. Cleaves VCAN in the pericellular matrix surrounding myoblasts, facilitating myoblast contact and fusion which is required for skeletal muscle development and regeneration. Participates in the development of brown adipose tissue and browning of white adipose tissue. Plays an important role for T-lymphocyte migration from draining lymph nodes following viral infection. The polypeptide is A disintegrin and metalloproteinase with thrombospondin motifs 5 (Adamts5) (Mus musculus (Mouse)).